The following is a 294-amino-acid chain: Small ribosomal subunit protein uS2 (294 aa).

The segment covering 256 to 274 (SGKFIMDEDPDSKKTKTAE) has biased composition (basic and acidic residues). The tract at residues 256–294 (SGKFIMDEDPDSKKTKTAEEPSATIEPSTTTTVEVDQNE) is disordered. Residues 280-294 (IEPSTTTTVEVDQNE) are compositionally biased toward polar residues.

It belongs to the universal ribosomal protein uS2 family.

The protein is Small ribosomal subunit protein uS2 of Leptospira interrogans serogroup Icterohaemorrhagiae serovar Lai (strain 56601).